The sequence spans 461 residues: tRNA-splicing endonuclease subunit Sen2 (461 aa).

2 disordered regions span residues 140-176 (GAEQ…TSSP) and 190-210 (GDPA…DVKE). Residues 144–176 (TGDSCDTVCPNTENTELSGQSSTDTGNIATSSP) show a composition bias toward polar residues. Basic and acidic residues predominate over residues 201–210 (KEQEPADVKE). Catalysis depends on residues Tyr365, His373, and Lys412.

The protein belongs to the tRNA-intron endonuclease family. As to quaternary structure, tRNA splicing endonuclease is a heterotetramer composed of SEN2, SEN15, SEN34/LENG5 and SEN54.

It localises to the nucleus. It carries out the reaction pretRNA = a 3'-half-tRNA molecule with a 5'-OH end + a 5'-half-tRNA molecule with a 2',3'-cyclic phosphate end + an intron with a 2',3'-cyclic phosphate and a 5'-hydroxyl terminus.. Functionally, constitutes one of the two catalytic subunit of the tRNA-splicing endonuclease complex, a complex responsible for identification and cleavage of the splice sites in pre-tRNA. It cleaves pre-tRNA at the 5'- and 3'-splice sites to release the intron. The products are an intron and two tRNA half-molecules bearing 2',3'-cyclic phosphate and 5'-OH termini. There are no conserved sequences at the splice sites, but the intron is invariably located at the same site in the gene, placing the splice sites an invariant distance from the constant structural features of the tRNA body. Probably carries the active site for 5'-splice site cleavage. The tRNA splicing endonuclease is also involved in mRNA processing via its association with pre-mRNA 3'-end processing factors, establishing a link between pre-tRNA splicing and pre-mRNA 3'-end formation, suggesting that the endonuclease subunits function in multiple RNA-processing events. In Gallus gallus (Chicken), this protein is tRNA-splicing endonuclease subunit Sen2 (TSEN2).